Here is a 232-residue protein sequence, read N- to C-terminus: Thrombin-like enzyme BjussuSP-1 (232 aa).

The region spanning 1 to 223 (VLGGDECDIN…YTDWIQRNIA (223 aa)) is the Peptidase S1 domain. Disulfide bonds link cysteine 7-cysteine 138, cysteine 25-cysteine 41, cysteine 73-cysteine 230, cysteine 117-cysteine 184, cysteine 149-cysteine 163, and cysteine 174-cysteine 199. Histidine 40 acts as the Charge relay system in catalysis. The N-linked (GlcNAc...) asparagine glycan is linked to asparagine 77. The active-site Charge relay system is aspartate 85. Asparagine 129 carries N-linked (GlcNAc...) asparagine glycosylation. The Charge relay system role is filled by serine 178.

It belongs to the peptidase S1 family. Snake venom subfamily. In terms of assembly, monomer. N-glycosylated. Contains sialic acid residues. Deglycosylation reduces in 50% the formation of fibrin clot. Expressed by the venom gland.

Its subcellular location is the secreted. Inhibited by leupeptin, heparin, and 1.10-phenantroline. Its function is as follows. Thrombin-like enzyme that shows clotting activity upon human plasma. Shows specific fibrinogenolytic activity for Aalpha chain (FGA). Hydrolyzes fibrin, BAPNA and TAME, as well as chromogenic artificial substrates of the blood coagulation cascasde: S-27654 for factor X (F10), S-2302 for kallikrein (KLK), factor XIa (F11), and XIIa (F12), and S-2266 for kallikrein and factor XIa (F11). Subcutaneous injection into mice induces a mild edema. Intravenous and intramuscular injection reduce plasma fibrinogen concentration and increase the levels of fibrin(ogen) degradation products. Intramuscular injection also promotes an increase in the expression of proMMP-9, but is unable to activate it. The sequence is that of Thrombin-like enzyme BjussuSP-1 from Bothrops jararacussu (Jararacussu).